We begin with the raw amino-acid sequence, 157 residues long: Ribonuclease H (157 aa).

Residues 2-145 form the RNase H type-1 domain; the sequence is NAEISKIYTD…CDAIARAFAA (144 aa). The Mg(2+) site is built by D11, E50, D74, and D137.

This sequence belongs to the RNase H family. As to quaternary structure, monomer. Mg(2+) serves as cofactor.

The protein localises to the cytoplasm. The enzyme catalyses Endonucleolytic cleavage to 5'-phosphomonoester.. Its function is as follows. Endonuclease that specifically degrades the RNA of RNA-DNA hybrids. This chain is Ribonuclease H, found in Cyanothece sp. (strain PCC 7425 / ATCC 29141).